The primary structure comprises 186 residues: MEEINLYLDDAKDSMQKAIKHTELELSKIRAGKASPNMFDGIMVDYYGSSTPLAQVATVSVPEPRSITIKAYEKSMVTTIEKAIRDANMGFNPQNDGDVIRINVPPLTEERRRDLVKQTKAEGESGKVRIRKIRQETNDELKKLLKDGASEDEVKRAEEVVQALTNDTSAKLEALIAAKEKELMTV.

Belongs to the RRF family.

It is found in the cytoplasm. In terms of biological role, responsible for the release of ribosomes from messenger RNA at the termination of protein biosynthesis. May increase the efficiency of translation by recycling ribosomes from one round of translation to another. The sequence is that of Ribosome-recycling factor from Cytophaga hutchinsonii (strain ATCC 33406 / DSM 1761 / CIP 103989 / NBRC 15051 / NCIMB 9469 / D465).